Here is a 181-residue protein sequence, read N- to C-terminus: Histone deacetylase complex subunit SAP30L-B (181 aa).

Disulfide bonds link Cys-26–Cys-27 and Cys-35–Cys-71. The segment at 26–74 adopts an Atypical zinc-finger fold; it reads CCLIDGGERCPRPAGNASFSKRVQKSISQKKLKLDIDKSVRHLYICDFH. The tract at residues 82-103 is disordered; the sequence is RNKRKRKTSDDGGDSPEHETDV. The Nuclear localization signal (NLS) motif lies at 83–88; it reads NKRKRK. The interval 85 to 87 is important for DNA and phosphoinositide binding; sequence RKR.

It belongs to the SAP30 family. Interacts with components of the histone deacetylase complex sin3a, hdac1 and hdac2. Binds histones and nucleosomes.

The protein resides in the nucleus. Its subcellular location is the nucleolus. Functions as a transcription repressor, probably via its interaction with histone deacetylase complexes. Involved in the functional recruitment of the class 1 Sin3-histone deacetylase complex (HDAC) to the nucleolus. Binds DNA, apparently without sequence-specificity, and bends bound double-stranded DNA. Binds phosphoinositol phosphates (phosphoinositol 3-phosphate, phosphoinositol 4-phosphate and phosphoinositol 5-phosphate) via the same basic sequence motif that mediates DNA binding and nuclear import. The polypeptide is Histone deacetylase complex subunit SAP30L-B (sap30l-b) (Xenopus laevis (African clawed frog)).